The primary structure comprises 551 residues: Alkaline nuclease (551 aa).

Belongs to the herpesviridae alkaline nuclease family. As to quaternary structure, interacts with major DNA-binding protein; this interaction increases the nuclease processivity of the alkaline exonuclease.

It is found in the host nucleus. Its subcellular location is the host cytoplasm. Its function is as follows. Plays a role in processing non linear or branched viral DNA intermediates in order to promote the production of mature packaged unit-length linear progeny viral DNA molecules. Exhibits endonuclease and exonuclease activities and accepts both double-stranded and single-stranded DNA as substrate. Exonuclease digestion of DNA is in the 5'-&gt; 3' direction and the products are 5'-monophosphate nucleosides. Additionally, forms a recombinase with the major DNA-binding protein, which displays strand exchange activity. The polypeptide is Alkaline nuclease (Varicella-zoster virus (strain Oka vaccine) (HHV-3)).